The chain runs to 243 residues: Probable 2-phosphosulfolactate phosphatase (243 aa).

Belongs to the ComB family. Requires Mg(2+) as cofactor.

The catalysed reaction is (2R)-O-phospho-3-sulfolactate + H2O = (2R)-3-sulfolactate + phosphate. This Prochlorococcus marinus (strain SARG / CCMP1375 / SS120) protein is Probable 2-phosphosulfolactate phosphatase.